A 241-amino-acid chain; its full sequence is MLENIRIILVETSHTGNMGSTARAMKTMGLTNLYLVNPLVQPDSHAIALSAGASDVIGHATIVDSLDKALAGCGLVIGTSARSRTLSWPMVEPRECGERSVQQAEHASVAIVFGRERVGLTNEELQKCHYHLNIPTNPEYGSLNLAMAVQLVSYEIRMAYLARQDKTEQKTDEVEYPLADDMERFYHHLECVLNDSGFIRKAHPGQIMNRLRRLFTRARPEMQELNILRGILSSVEKWAKK.

Residues 79 to 81 (TSA), glycine 114, isoleucine 134, and 141 to 143 (GSL) each bind S-adenosyl-L-methionine.

This sequence belongs to the class IV-like SAM-binding methyltransferase superfamily. RNA methyltransferase TrmH family. As to quaternary structure, homodimer.

Its subcellular location is the cytoplasm. The catalysed reaction is cytidine(32) in tRNA + S-adenosyl-L-methionine = 2'-O-methylcytidine(32) in tRNA + S-adenosyl-L-homocysteine + H(+). It catalyses the reaction uridine(32) in tRNA + S-adenosyl-L-methionine = 2'-O-methyluridine(32) in tRNA + S-adenosyl-L-homocysteine + H(+). Functionally, catalyzes the formation of 2'O-methylated cytidine (Cm32) or 2'O-methylated uridine (Um32) at position 32 in tRNA. This is tRNA (cytidine/uridine-2'-O-)-methyltransferase TrmJ (trmJ) from Photorhabdus laumondii subsp. laumondii (strain DSM 15139 / CIP 105565 / TT01) (Photorhabdus luminescens subsp. laumondii).